The chain runs to 442 residues: DNA N(6)-methyladenine demethylase ALKBH1D (442 aa).

Over residues 135-144 (SMVHFDSTNP) the composition is skewed to polar residues. Residues 135–185 (SMVHFDSTNPSSSSKSSQSQNLKIRKVRNHRNSGFKSRDQSPQRIKDPPPF) are disordered. Positions 145–154 (SSSSKSSQSQ) are enriched in low complexity. The span at 157-167 (KIRKVRNHRNS) shows a compositional bias: basic residues. Basic and acidic residues predominate over residues 170–183 (KSRDQSPQRIKDPP). Residues 332–442 (SPDICIVNFY…GRLNLTFRHF (111 aa)) form the Fe2OG dioxygenase domain. 339–341 (NFY) serves as a coordination point for 2-oxoglutarate. The Fe cation site is built by histidine 350, aspartate 352, and histidine 410. Position 434 to 440 (434 to 440 (RLNLTFR)) interacts with 2-oxoglutarate.

It belongs to the alkB family. Fe(2+) serves as cofactor. Expressed at low levels in roots, seedlings and rosette leaves, but barely in cauline leaves, stems, siliques and flowers.

Its subcellular location is the nucleus. The protein localises to the cytoplasm. It carries out the reaction an N(6)-methyl-2'-deoxyadenosine in DNA + 2-oxoglutarate + O2 = a 2'-deoxyadenosine in DNA + formaldehyde + succinate + CO2. Its function is as follows. Dioxygenase that catalyzes DNA N(6)-methyladenine (6 mA) demethylation to modulate gene expression and regulate seed germination. The polypeptide is DNA N(6)-methyladenine demethylase ALKBH1D (Arabidopsis thaliana (Mouse-ear cress)).